Consider the following 251-residue polypeptide: Flap endonuclease Xni (251 aa).

Asp104 provides a ligand contact to Mg(2+). The 90-residue stretch at 160-249 (VLPRQLPDYW…IDGNLQQLRL (90 aa)) folds into the 5'-3' exonuclease domain. 5 residues coordinate K(+): Leu171, Ala172, Pro180, Val182, and Ile185. The tract at residues 184–189 (GIGPKS) is interaction with DNA.

This sequence belongs to the Xni family. The cofactor is Mg(2+). Requires K(+) as cofactor.

Its function is as follows. Has flap endonuclease activity. During DNA replication, flap endonucleases cleave the 5'-overhanging flap structure that is generated by displacement synthesis when DNA polymerase encounters the 5'-end of a downstream Okazaki fragment. In Salmonella choleraesuis (strain SC-B67), this protein is Flap endonuclease Xni.